We begin with the raw amino-acid sequence, 527 residues long: Benzoate--CoA ligase (527 aa).

It belongs to the ATP-dependent AMP-binding enzyme family. Benzoate-CoA ligase subfamily. As to quaternary structure, monomer.

The enzyme catalyses benzoate + ATP + CoA = benzoyl-CoA + AMP + diphosphate. In terms of biological role, catalyzes the ligation of benzoate and CoA to form benzoyl-CoA at the expense of ATP. The enzyme also ligates 2-aminobenzoate and CoA. The enzyme shows activity toward a number of benzoate derivatives. This Thauera aromatica protein is Benzoate--CoA ligase (bclA).